Consider the following 272-residue polypeptide: Aquaporin-1 (272 aa).

Residues M1–W11 are Cytoplasmic-facing. Residues R12–I29 traverse the membrane as a helical segment. The Extracellular portion of the chain corresponds to G30–V48. N42 carries an N-linked (GlcNAc...) asparagine glycan. The chain crosses the membrane as a helical span at residues Q49–Q67. Over S68 to G70 the chain is Cytoplasmic. The stretch at H71–G84 is an intramembrane region. The NPA 1 signature appears at N78 to A80. The Cytoplasmic segment spans residues L85 to S92. The helical transmembrane segment at I93 to T111 threads the bilayer. At V112–V135 the chain is on the extracellular side. The helical transmembrane segment at N136–V155 threads the bilayer. Residues L156–D166 are Cytoplasmic-facing. A helical membrane pass occupies residues L167–L184. At L185–Y189 the chain is on the extracellular side. Residues T190–S202 lie within the membrane without spanning it. The NPA 2 motif lies at N195–A197. Residues S203–F209 lie on the Extracellular side of the membrane. A helical membrane pass occupies residues Q210 to V227. Over L228–K272 the chain is Cytoplasmic. Residue S250 is modified to Phosphoserine. Y256 bears the Phosphotyrosine mark. Residue S265 is modified to Phosphoserine.

Belongs to the MIP/aquaporin (TC 1.A.8) family. As to quaternary structure, homotetramer; each monomer provides an independent water pore. Component of the ankyrin-1 complex in the erythrocyte, composed of ANK1, RHCE, RHAG, SLC4A1, EPB42, GYPA, GYPB and AQP1. Interacts with EPHB2; involved in endolymph production in the inner ear. Identified in a complex with STOM. Interacts (via the N-terminal) with ANK1 (via ANK 1-5 repeats). Interacts (via the C-terminal) with EPB42. As to expression, detected in fetal kidney (at protein level). Detected in fetal kidney.

It is found in the cell membrane. The enzyme catalyses H2O(in) = H2O(out). It carries out the reaction nitric oxide(out) = nitric oxide(in). It catalyses the reaction CO2(out) = CO2(in). The catalysed reaction is glycerol(in) = glycerol(out). The enzyme catalyses H2O2(out) = H2O2(in). It carries out the reaction K(+)(in) = K(+)(out). It catalyses the reaction Na(+)(in) = Na(+)(out). Forms a water channel that facilitates the transport of water across cell membranes, playing a crucial role in water homeostasis in various tissues. Could also be permeable to small solutes including hydrogen peroxide, glycerol and gases such as amonnia (NH3), nitric oxide (NO) and carbon dioxide (CO2). Recruited to the ankyrin-1 complex, a multiprotein complex of the erythrocyte membrane, it could be part of a CO2 metabolon, linking facilitated diffusion of CO2 across the membrane, anion exchange of Cl(-)/HCO3(-) and interconversion of dissolved CO2 and carbonic acid in the cytosol. In vitro, it shows non-selective gated cation channel activity and may be permeable to cations like K(+) and Na(+) in vivo. In Ovis aries (Sheep), this protein is Aquaporin-1.